The following is a 304-amino-acid chain: Dermonecrotic toxin LiSicTox-betaIA1ii (304 aa).

Positions 1–21 (MLLCAVISFIVYAVFLQEANG) are cleaved as a signal peptide. Residues 22 to 26 (HAAER) constitute a propeptide that is removed on maturation. H38 is a catalytic residue. Mg(2+) contacts are provided by E58 and D60. The active-site Nucleophile is the H74. Cystine bridges form between C78–C84 and C80–C223. Position 118 (D118) interacts with Mg(2+).

It belongs to the arthropod phospholipase D family. Class II subfamily. The cofactor is Mg(2+). In terms of tissue distribution, expressed by the venom gland.

It localises to the secreted. The catalysed reaction is an N-(acyl)-sphingosylphosphocholine = an N-(acyl)-sphingosyl-1,3-cyclic phosphate + choline. It catalyses the reaction an N-(acyl)-sphingosylphosphoethanolamine = an N-(acyl)-sphingosyl-1,3-cyclic phosphate + ethanolamine. The enzyme catalyses a 1-acyl-sn-glycero-3-phosphocholine = a 1-acyl-sn-glycero-2,3-cyclic phosphate + choline. It carries out the reaction a 1-acyl-sn-glycero-3-phosphoethanolamine = a 1-acyl-sn-glycero-2,3-cyclic phosphate + ethanolamine. In terms of biological role, dermonecrotic toxins cleave the phosphodiester linkage between the phosphate and headgroup of certain phospholipids (sphingolipid and lysolipid substrates), forming an alcohol (often choline) and a cyclic phosphate. This toxin acts on sphingomyelin (SM) with low activity. It may also act on ceramide phosphoethanolamine (CPE), lysophosphatidylcholine (LPC) and lysophosphatidylethanolamine (LPE), but not on lysophosphatidylserine (LPS), and lysophosphatidylglycerol (LPG). It acts by transphosphatidylation, releasing exclusively cyclic phosphate products as second products. Induces dermonecrosis, hemolysis, increased vascular permeability, edema, inflammatory response, and platelet aggregation. The polypeptide is Dermonecrotic toxin LiSicTox-betaIA1ii (Loxosceles intermedia (Brown spider)).